Here is a 368-residue protein sequence, read N- to C-terminus: Proton-coupled zinc antiporter SLC30A8 (368 aa).

Topologically, residues 1-78 (MEFLERTYLV…AKWRLCAASA (78 aa)) are cytoplasmic. The Zn(2+) site is built by His-51, Cys-52, and His-53. Positions 51–53 (HCH) match the HCH Motif; seals regulatory zinc-binding pocket motif. Residues 79 to 99 (ICFFFMVAEVVGGHVAGSLAV) form a helical membrane-spanning segment. Residues 100–102 (LTD) are Lumenal, vesicle-facing. The helical transmembrane segment at 103–123 (AAHLLIDLTSFLLSLFSLWLS) threads the bilayer. Zn(2+)-binding residues include His-105 and Asp-109. Residues 124 to 139 (SRPPSKRLTFGWYRAE) lie on the Cytoplasmic side of the membrane. Residues 140-160 (ILGALLSVLCIWVVTGVLVYL) traverse the membrane as a helical segment. At 161–174 (ACERLLYPDYQIQA) the chain is on the lumenal, vesicle side. A helical membrane pass occupies residues 175-195 (GIMITVSGCAVAANIVLTLIL). The Cytoplasmic segment spans residues 196–216 (HQRHLGHNHKDAQANASVRAA). Residues 217 to 237 (FVHALGDVFQSTSVLISALII) form a helical membrane-spanning segment. Zn(2+)-binding residues include His-219 and Asp-223. Topologically, residues 238-245 (YFKPDYKM) are lumenal, vesicle. Residues 246 to 266 (ADPVCTFISSVLALASTVMIL) traverse the membrane as a helical segment. Residues 267–368 (KDFSILLMEG…SCLLCEDPQD (102 aa)) are Cytoplasmic-facing. 6 residues coordinate Zn(2+): His-300, His-317, His-344, Glu-351, Cys-360, and Cys-363.

Belongs to the cation diffusion facilitator (CDF) transporter (TC 2.A.4) family. SLC30A subfamily. As to quaternary structure, homodimer. Expressed in endocrine pancreatic islet alpha and beta cells. May be more abundant in beta cells than in alpha cells. Expressed in cubical epithelium lining thyroid follicles (at protein level). In the adrenal gland, detected in the cortex, but not in the medulla (at protein level).

The protein resides in the cytoplasmic vesicle. The protein localises to the secretory vesicle membrane. Its subcellular location is the cell membrane. The catalysed reaction is Zn(2+)(in) + 2 H(+)(out) = Zn(2+)(out) + 2 H(+)(in). Its function is as follows. Proton-coupled zinc ion antiporter mediating the entry of zinc into the lumen of pancreatic beta cell secretory granules, thereby regulating insulin secretion. The polypeptide is Proton-coupled zinc antiporter SLC30A8 (Rattus norvegicus (Rat)).